A 198-amino-acid polypeptide reads, in one-letter code: 5'-deoxynucleotidase hdd1 (198 aa).

The HD domain occupies 38–144 (IADHMYRMGI…VKDIDKFEMI (107 aa)). Residues His-41, His-69, Asp-70, Glu-73, Asp-78, Ile-79, and Asp-139 each coordinate a divalent metal cation.

The protein belongs to the HDDC2 family. As to quaternary structure, homodimer. Requires Mn(2+) as cofactor. Co(2+) is required as a cofactor. Mg(2+) serves as cofactor.

The protein resides in the cytoplasm. It is found in the nucleus. It carries out the reaction a 2'-deoxyribonucleoside 5'-phosphate + H2O = a 2'-deoxyribonucleoside + phosphate. Its function is as follows. Catalyzes the dephosphorylation of the nucleoside 5'-monophosphates deoxyadenosine monophosphate (dAMP), deoxycytidine monophosphate (dCMP), deoxyguanosine monophosphate (dGMP) and deoxythymidine monophosphate (dTMP). In Schizosaccharomyces pombe (strain 972 / ATCC 24843) (Fission yeast), this protein is 5'-deoxynucleotidase hdd1.